A 255-amino-acid polypeptide reads, in one-letter code: tRNA (guanine-N(1)-)-methyltransferase (255 aa).

Residues Gly-113 and 133–138 (IGDYVL) contribute to the S-adenosyl-L-methionine site.

This sequence belongs to the RNA methyltransferase TrmD family. As to quaternary structure, homodimer.

Its subcellular location is the cytoplasm. The catalysed reaction is guanosine(37) in tRNA + S-adenosyl-L-methionine = N(1)-methylguanosine(37) in tRNA + S-adenosyl-L-homocysteine + H(+). In terms of biological role, specifically methylates guanosine-37 in various tRNAs. The protein is tRNA (guanine-N(1)-)-methyltransferase of Salmonella schwarzengrund (strain CVM19633).